The primary structure comprises 208 residues: ATP-dependent Clp protease proteolytic subunit (208 aa).

The Nucleophile role is filled by serine 105. Histidine 130 is a catalytic residue.

The protein belongs to the peptidase S14 family. As to quaternary structure, fourteen ClpP subunits assemble into 2 heptameric rings which stack back to back to give a disk-like structure with a central cavity, resembling the structure of eukaryotic proteasomes.

Its subcellular location is the cytoplasm. The catalysed reaction is Hydrolysis of proteins to small peptides in the presence of ATP and magnesium. alpha-casein is the usual test substrate. In the absence of ATP, only oligopeptides shorter than five residues are hydrolyzed (such as succinyl-Leu-Tyr-|-NHMec, and Leu-Tyr-Leu-|-Tyr-Trp, in which cleavage of the -Tyr-|-Leu- and -Tyr-|-Trp bonds also occurs).. Cleaves peptides in various proteins in a process that requires ATP hydrolysis. Has a chymotrypsin-like activity. Plays a major role in the degradation of misfolded proteins. The chain is ATP-dependent Clp protease proteolytic subunit from Xylella fastidiosa (strain M23).